The chain runs to 161 residues: Cyclic pyranopterin monophosphate synthase (161 aa).

Residues 75-77 (LCH) and 113-114 (ME) each bind substrate. Asp-128 is an active-site residue.

This sequence belongs to the MoaC family. In terms of assembly, homohexamer; trimer of dimers.

It catalyses the reaction (8S)-3',8-cyclo-7,8-dihydroguanosine 5'-triphosphate = cyclic pyranopterin phosphate + diphosphate. It functions in the pathway cofactor biosynthesis; molybdopterin biosynthesis. Functionally, catalyzes the conversion of (8S)-3',8-cyclo-7,8-dihydroguanosine 5'-triphosphate to cyclic pyranopterin monophosphate (cPMP). This Cronobacter sakazakii (strain ATCC BAA-894) (Enterobacter sakazakii) protein is Cyclic pyranopterin monophosphate synthase.